Here is a 289-residue protein sequence, read N- to C-terminus: 2-hydroxy-6-oxononadienedioate/2-hydroxy-6-oxononatrienedioate hydrolase (289 aa).

The 237-residue stretch at 39-275 (TVVMLHGSGP…RCGHWAQWEH (237 aa)) folds into the AB hydrolase-1 domain. Catalysis depends on His-269, which acts as the Proton acceptor.

It belongs to the AB hydrolase superfamily. MhpC family. Homodimer.

The enzyme catalyses (2Z,4E)-2-hydroxy-6-oxonona-2,4-dienedioate + H2O = (2Z)-2-hydroxypenta-2,4-dienoate + succinate + H(+). It catalyses the reaction (2Z,4E,7E)-2-hydroxy-6-oxonona-2,4,7-trienedioate + H2O = (2Z)-2-hydroxypenta-2,4-dienoate + fumarate + H(+). Its pathway is aromatic compound metabolism; 3-phenylpropanoate degradation. Its function is as follows. Catalyzes the cleavage of the C5-C6 bond of 2-hydroxy-6-oxononadienedioate and 2-hydroxy-6-oxononatrienedioate, a dienol ring fission product of the bacterial meta-cleavage pathway for degradation of phenylpropionic acid. The chain is 2-hydroxy-6-oxononadienedioate/2-hydroxy-6-oxononatrienedioate hydrolase from Paraburkholderia xenovorans (strain LB400).